The primary structure comprises 106 residues: Small ribosomal subunit protein uS10 (106 aa).

The protein belongs to the universal ribosomal protein uS10 family. Part of the 30S ribosomal subunit.

Its function is as follows. Involved in the binding of tRNA to the ribosomes. The protein is Small ribosomal subunit protein uS10 of Archaeoglobus fulgidus (strain ATCC 49558 / DSM 4304 / JCM 9628 / NBRC 100126 / VC-16).